The sequence spans 215 residues: Protein N-lysine methyltransferase METTL21A (215 aa).

S-adenosyl-L-methionine contacts are provided by residues tryptophan 47, 73–75 (GAG), aspartate 94, tryptophan 125, and alanine 141.

It belongs to the methyltransferase superfamily. METTL21 family.

It is found in the cytoplasm. The enzyme catalyses L-lysyl-[protein] + 3 S-adenosyl-L-methionine = N(6),N(6),N(6)-trimethyl-L-lysyl-[protein] + 3 S-adenosyl-L-homocysteine + 3 H(+). In terms of biological role, protein-lysine methyltransferase that selectively trimethylates residues in heat shock protein 70 (HSP70) family members. The polypeptide is Protein N-lysine methyltransferase METTL21A (mettl21a) (Xenopus tropicalis (Western clawed frog)).